We begin with the raw amino-acid sequence, 398 residues long: Argininosuccinate synthase (398 aa).

8–16 (AYSGGLDTS) provides a ligand contact to ATP. An L-citrulline-binding site is contributed by Y87. Position 117 (G117) interacts with ATP. L-aspartate-binding residues include T119, N123, and D124. N123 is a binding site for L-citrulline. The L-citrulline site is built by R127, S175, E259, and Y271.

This sequence belongs to the argininosuccinate synthase family. Type 1 subfamily. In terms of assembly, homotetramer.

The protein resides in the cytoplasm. The catalysed reaction is L-citrulline + L-aspartate + ATP = 2-(N(omega)-L-arginino)succinate + AMP + diphosphate + H(+). Its pathway is amino-acid biosynthesis; L-arginine biosynthesis; L-arginine from L-ornithine and carbamoyl phosphate: step 2/3. The chain is Argininosuccinate synthase from Corynebacterium kroppenstedtii (strain DSM 44385 / JCM 11950 / CIP 105744 / CCUG 35717).